An 859-amino-acid chain; its full sequence is Leucine--tRNA ligase (859 aa).

Positions Pro-42–His-52 match the 'HIGH' region motif. Positions Lys-618–Ser-622 match the 'KMSKS' region motif. ATP is bound at residue Lys-621.

The protein belongs to the class-I aminoacyl-tRNA synthetase family.

The protein localises to the cytoplasm. The enzyme catalyses tRNA(Leu) + L-leucine + ATP = L-leucyl-tRNA(Leu) + AMP + diphosphate. This is Leucine--tRNA ligase from Shewanella oneidensis (strain ATCC 700550 / JCM 31522 / CIP 106686 / LMG 19005 / NCIMB 14063 / MR-1).